Reading from the N-terminus, the 232-residue chain is Flagellar L-ring protein (232 aa).

Residues 1–15 (MKKVLFYVLPFAFFG) form the signal peptide. Residue Cys16 is the site of N-palmitoyl cysteine attachment. Residue Cys16 is the site of S-diacylglycerol cysteine attachment.

It belongs to the FlgH family. As to quaternary structure, the basal body constitutes a major portion of the flagellar organelle and consists of four rings (L,P,S, and M) mounted on a central rod.

Its subcellular location is the cell outer membrane. The protein resides in the bacterial flagellum basal body. Assembles around the rod to form the L-ring and probably protects the motor/basal body from shearing forces during rotation. This Campylobacter jejuni subsp. jejuni serotype O:23/36 (strain 81-176) protein is Flagellar L-ring protein.